The primary structure comprises 170 residues: Adenine phosphoribosyltransferase (170 aa).

This sequence belongs to the purine/pyrimidine phosphoribosyltransferase family. As to quaternary structure, homodimer.

The protein localises to the cytoplasm. The enzyme catalyses AMP + diphosphate = 5-phospho-alpha-D-ribose 1-diphosphate + adenine. The protein operates within purine metabolism; AMP biosynthesis via salvage pathway; AMP from adenine: step 1/1. In terms of biological role, catalyzes a salvage reaction resulting in the formation of AMP, that is energically less costly than de novo synthesis. The protein is Adenine phosphoribosyltransferase of Geobacillus thermodenitrificans (strain NG80-2).